Reading from the N-terminus, the 327-residue chain is Aspartate--ammonia ligase (327 aa).

Belongs to the class-II aminoacyl-tRNA synthetase family. AsnA subfamily.

It localises to the cytoplasm. The enzyme catalyses L-aspartate + NH4(+) + ATP = L-asparagine + AMP + diphosphate + H(+). The protein operates within amino-acid biosynthesis; L-asparagine biosynthesis; L-asparagine from L-aspartate (ammonia route): step 1/1. In Bacillus cereus (strain AH820), this protein is Aspartate--ammonia ligase.